Consider the following 437-residue polypeptide: MAAAFASLPTFSVVNSSRFPRRRIGFSCSKKPLEVRCSSGNTRYTKQRGAFTSLKECAISLALSVGLMVSVPSIALPPNAHAVANPVIPDVSVLISGPPIKDPEALLRYALPIDNKAIREVQKPLEDITDSLKIAGVKALDSVERNVRQASRTLQQGKSIIVAGFAESKKDHGNEMIEKLEAGMQDMLKIVEDRKRDAVAPKQKEILKYVGGIEEDMVDGFPYEVPEEYRNMPLLKGRASVDMKVKIKDNPNIEDCVFRIVLDGYNAPVTAGNFVDLVERHFYDGMEIQRSDGFVVQTGDPEGPAEGFIDPSTEKTRTVPLEIMVTGEKTPFYGSTLEELGLYKAQVVIPFNAFGTMAMAREEFENDSGSSQVFWLLKESELTPSNSNILDGRYAVFGYVTDNEDFLADLKVGDVIESIQVVSGLENLANPSYKIAG.

A chloroplast-targeting transit peptide spans 1–36 (MAAAFASLPTFSVVNSSRFPRRRIGFSCSKKPLEVR). The N-terminal 56 residues, 37–92 (CSSGNTRYTKQRGAFTSLKECAISLALSVGLMVSVPSIALPPNAHAVANPVIPDVS), are a transit peptide targeting the thylakoid. The 193-residue stretch at 245–437 (VKIKDNPNIE…LANPSYKIAG (193 aa)) folds into the PPIase cyclophilin-type domain.

In terms of tissue distribution, ubiquitous. Lower levels of expression in roots.

The protein resides in the plastid. It localises to the chloroplast thylakoid lumen. It carries out the reaction [protein]-peptidylproline (omega=180) = [protein]-peptidylproline (omega=0). Functionally, required for the assembly and stabilization of PSII, but has no PPIases activity. This is Peptidyl-prolyl cis-trans isomerase CYP38, chloroplastic (CYP38) from Arabidopsis thaliana (Mouse-ear cress).